A 492-amino-acid chain; its full sequence is E3 ubiquitin-protein ligase TRIM35 (492 aa).

The residue at position 1 (M1) is an N-acetylmethionine. Phosphoserine occurs at positions 4 and 8. The RING-type zinc-finger motif lies at 21–61 (CAVCYDPFRDAVTLRCGHNFCRGCVSRCWEVQVSPTCPVCK). The B box-type zinc finger occupies 96–137 (RFSRVCRLHRGQLSLFCLEDKELLCCSCQADPRHQGHRVQPV). Zn(2+)-binding residues include C101, H104, C123, and H129. Residues 210–249 (AEETRQKQLLADEKMKQLTEETEVLAHEIERLQMEMKEDD) are a coiled coil. Residues 283–486 (YLGSLQYRVW…LRICPLHISV (204 aa)) enclose the B30.2/SPRY domain.

As to quaternary structure, interacts with PKM isoform M2, but not isoform M1; this interaction may compete with that between PKM and FGFR1, and hence reduces FGFR1-dependent tyrosine phosphorylation of PKM. Interacts with IRF7; this interaction promotes IRF7 proteasomal degradation. Interacts with TRAF3; this interaction promotes TRAF3 activation.

It is found in the cytoplasm. It localises to the nucleus. It carries out the reaction S-ubiquitinyl-[E2 ubiquitin-conjugating enzyme]-L-cysteine + [acceptor protein]-L-lysine = [E2 ubiquitin-conjugating enzyme]-L-cysteine + N(6)-ubiquitinyl-[acceptor protein]-L-lysine.. The protein operates within protein modification; protein ubiquitination. In terms of biological role, E3 ubiquitin-protein ligase that participates in multiple biological processes including cell death, glucose metabolism, and in particular, the innate immune response. Mediates 'Lys-63'-linked polyubiquitination of TRAF3 thereby promoting type I interferon production via RIG-I signaling pathway. Can also catalyze 'Lys-48'-linked polyubiquitination and proteasomal degradation of viral proteins such as influenza virus PB2. Acts as a negative feedback regulator of TLR7- and TLR9-triggered signaling. Mechanistically, promotes the 'Lys-48'-linked ubiquitination of IRF7 and induces its degradation via a proteasome-dependent pathway. Reduces FGFR1-dependent tyrosine phosphorylation of PKM, inhibiting PKM-dependent lactate production, glucose metabolism, and cell growth. This Pongo abelii (Sumatran orangutan) protein is E3 ubiquitin-protein ligase TRIM35 (TRIM35).